The primary structure comprises 488 residues: N-succinylglutamate 5-semialdehyde dehydrogenase (488 aa).

An NAD(+)-binding site is contributed by 221 to 226 (GSSRTG). Active-site residues include E244 and C278.

The protein belongs to the aldehyde dehydrogenase family. AstD subfamily.

It catalyses the reaction N-succinyl-L-glutamate 5-semialdehyde + NAD(+) + H2O = N-succinyl-L-glutamate + NADH + 2 H(+). The protein operates within amino-acid degradation; L-arginine degradation via AST pathway; L-glutamate and succinate from L-arginine: step 4/5. Its function is as follows. Catalyzes the NAD-dependent reduction of succinylglutamate semialdehyde into succinylglutamate. This Pseudomonas savastanoi pv. phaseolicola (strain 1448A / Race 6) (Pseudomonas syringae pv. phaseolicola (strain 1448A / Race 6)) protein is N-succinylglutamate 5-semialdehyde dehydrogenase.